The following is a 37-amino-acid chain: AICTGADRPCAACCPCCPGTSCKAESNGVSYCRKDEP.

4 cysteine pairs are disulfide-bonded: cysteine 3/cysteine 17, cysteine 10/cysteine 22, cysteine 13/cysteine 14, and cysteine 16/cysteine 32.

The protein belongs to the neurotoxin 11 (kappa toxin) family. Expressed by the venom gland.

Its subcellular location is the secreted. In terms of biological role, this excitatory toxin inhibits insect calcium-activated potassium (KCa) channels (Slo-type). Pan-neuronal expression in Drosophila is lethal but flies engineered to express the toxin only in clock neurons have defects in circadian rhythm but a normal lifespan. The chain is Lambda-hexatoxin-Hv1c from Hadronyche versuta (Blue mountains funnel-web spider).